Consider the following 394-residue polypeptide: Na(+)/H(+) antiporter NhaA 2 (394 aa).

The next 11 membrane-spanning stretches (helical) occupy residues phenylalanine 13–leucine 33, leucine 58–leucine 78, isoleucine 93–alanine 113, glycine 124–glycine 144, isoleucine 153–phenylalanine 173, threonine 176–leucine 196, isoleucine 208–alanine 228, tyrosine 260–isoleucine 280, isoleucine 291–isoleucine 311, phenylalanine 327–leucine 347, and leucine 361–phenylalanine 381.

The protein belongs to the NhaA Na(+)/H(+) (TC 2.A.33) antiporter family.

Its subcellular location is the cell inner membrane. The enzyme catalyses Na(+)(in) + 2 H(+)(out) = Na(+)(out) + 2 H(+)(in). Its function is as follows. Na(+)/H(+) antiporter that extrudes sodium in exchange for external protons. In Campylobacter fetus subsp. fetus (strain 82-40), this protein is Na(+)/H(+) antiporter NhaA 2.